Here is a 150-residue protein sequence, read N- to C-terminus: MIPKVIDLAAPVAAQFNLEVVGAVFQTNQSPPVLRVDIRNCDADTGLEDCEKMSRALEAVLDEDDVFPEAYVLEISSPGLSTLLTCDRDFVSFRGFPVLVQTHQPYRGHHQWIGNLTGRDEKFVQLNQKGRPIKIPREEILQVQLHDSPE.

This sequence belongs to the RimP family.

It is found in the cytoplasm. Its function is as follows. Required for maturation of 30S ribosomal subunits. The chain is Ribosome maturation factor RimP from Acaryochloris marina (strain MBIC 11017).